The primary structure comprises 168 residues: MFFANIEKHSNFTYYILFFKFCKIRGELVTYKEKLLEKYPDLIYEITWTKEKDDSFLQITLNENNLEKITEYSKEISNILDNYEKELPSKYFLDISSRGINLSIQKENLDNYLEKYIEISLVNETKKIKGILWEIKNETIILKVNFKGQFRKIEYKKNNINLIEEVIK.

This sequence belongs to the RimP family.

The protein resides in the cytoplasm. In terms of biological role, required for maturation of 30S ribosomal subunits. This chain is Ribosome maturation factor RimP, found in Mycoplasma mobile (strain ATCC 43663 / 163K / NCTC 11711) (Mesomycoplasma mobile).